We begin with the raw amino-acid sequence, 393 residues long: S-adenosylmethionine synthase (393 aa).

Residue histidine 17 coordinates ATP. A Mg(2+)-binding site is contributed by aspartate 19. Glutamate 45 provides a ligand contact to K(+). L-methionine contacts are provided by glutamate 58 and glutamine 106. A flexible loop region spans residues 106-116; it reads QSAHIAQGVDA. ATP-binding positions include 171-173, aspartate 246, 252-253, alanine 269, and lysine 273; these read DAK and RK. Position 246 (aspartate 246) interacts with L-methionine. Lysine 277 is a binding site for L-methionine.

The protein belongs to the AdoMet synthase family. In terms of assembly, homotetramer; dimer of dimers. Mg(2+) is required as a cofactor. It depends on K(+) as a cofactor.

Its subcellular location is the cytoplasm. The catalysed reaction is L-methionine + ATP + H2O = S-adenosyl-L-methionine + phosphate + diphosphate. The protein operates within amino-acid biosynthesis; S-adenosyl-L-methionine biosynthesis; S-adenosyl-L-methionine from L-methionine: step 1/1. Its function is as follows. Catalyzes the formation of S-adenosylmethionine (AdoMet) from methionine and ATP. The overall synthetic reaction is composed of two sequential steps, AdoMet formation and the subsequent tripolyphosphate hydrolysis which occurs prior to release of AdoMet from the enzyme. The sequence is that of S-adenosylmethionine synthase from Roseobacter denitrificans (strain ATCC 33942 / OCh 114) (Erythrobacter sp. (strain OCh 114)).